Here is a 1214-residue protein sequence, read N- to C-terminus: Peregrin (1214 aa).

The segment at 21 to 47 (YECPVETCRKVYKSYSGIEYHLYHYDH) adopts a C2H2-type zinc-finger fold. Disordered stretches follow at residues 43 to 87 (YHYD…SPGR) and 118 to 177 (VVSE…PKLP). Positions 58-67 (LRKHKKKGRQ) are enriched in basic residues. The tract at residues 59 to 222 (RKHKKKGRQS…VEYDMDEEDY (164 aa)) is interaction with KAT6A and KAT6B. A compositionally biased stretch (low complexity) spans 74-85 (QSPSPSEVSQSP). Acidic residues predominate over residues 119 to 130 (VSEDEEAPEEAP). Ser-120 is modified (phosphoserine). Lys-147 carries the N6-acetyllysine modification. Over residues 148–167 (SGKHKNKEKRKDSNHHHHHN) the composition is skewed to basic residues. Phosphoserine is present on Ser-238. The PHD-type 1 zinc-finger motif lies at 273–323 (DAVCCICNDGECQNSNVILFCDMCNLAVHQECYGVPYIPEGQWLCRRCLQS). The segment at 327–360 (AVDCALCPNKGGAFKQTDDGRWAHVVCALWIPEV) adopts a C2HC pre-PHD-type zinc-finger fold. The segment at 384-448 (LTCYICKQRG…RKTAYCDIHT (65 aa)) adopts a PHD-type 2 zinc-finger fold. Residues 448-489 (TPPGSARRLPALSHSEGEEDEDEEEDEGKGWSSEKVKKAKAK) form a disordered region. Ser-460 and Ser-462 each carry phosphoserine. A compositionally biased stretch (acidic residues) spans 464–474 (GEEDEDEEEDE). Residues 501-821 (LAEKRAAAPV…IKKEMTALRR (321 aa)) form an interaction with MEAF6 and ING5 region. The interval 543-1079 (YWTLKRQSRN…RGAGWLSEDE (537 aa)) is required for RUNX1 and RUNX2 transcriptional activation. An N6-acetyllysine modification is found at Lys-580. The Bromo domain maps to 628–732 (MQLTPFLILL…EQGGAVLRQA (105 aa)). Residues 819 to 1062 (LRRKLAHQRE…VGTGRGVGHS (244 aa)) are disordered. Basic and acidic residues predominate over residues 825-838 (HQRETGRDGPERHG). Position 858 is a phosphothreonine (Thr-858). Positions 858–871 (TDSAAEESSSQETS) are enriched in low complexity. Phosphoserine occurs at positions 860, 917, 922, and 926. A compositionally biased stretch (low complexity) spans 993 to 1021 (SLPRSSSDSESSSSSSSSAASDRTSTTPS). A Phosphoserine modification is found at Ser-1076. The region spanning 1085–1168 (ALDLVWAKCR…RTKLVPLGVN (84 aa)) is the PWWP domain. Ser-1187 carries the phosphoserine modification.

As to quaternary structure, component of some HBO1 complex composed of KAT7/HBO1, MEAF6, ING5, and BRPF1. Component of the MOZ/MORF complex composed at least of ING5, KAT6A, KAT6B, MEAF6 and one of BRPF1, BRD1/BRPF2 and BRPF3. Interacts (via PHD-type zinc finger domains) with unmethylated histone H3 at 'Lys-4' (H3K4me0). Interacts with trimethylated 'Lys-36' of histone H3 (H3K36me3). Interacts with ING5; interaction directs BRPF1 to H4K4me3-enriched chromatin at the 5' of active genes. Interacts with KAT7. In terms of processing, acetylated by KAT6A. As to expression, high levels in testis.

It is found in the nucleus. It localises to the chromosome. The protein resides in the cytoplasm. Scaffold subunit of various histone acetyltransferase (HAT) complexes, such as the MOZ/MORF and HBO1 complexes, which have a histone H3 acetyltransferase activity. Plays a key role in HBO1 complex by directing KAT7/HBO1 specificity towards histone H3 'Lys-14' acetylation (H3K14ac). Some HAT complexes preferentially mediate histone H3 'Lys-23' (H3K23ac) acetylation. Positively regulates the transcription of RUNX1 and RUNX2. This chain is Peregrin, found in Homo sapiens (Human).